The following is a 101-amino-acid chain: Small ribosomal subunit protein uS10 (101 aa).

This sequence belongs to the universal ribosomal protein uS10 family. In terms of assembly, part of the 30S ribosomal subunit.

Involved in the binding of tRNA to the ribosomes. This chain is Small ribosomal subunit protein uS10, found in Phocaeicola vulgatus (strain ATCC 8482 / DSM 1447 / JCM 5826 / CCUG 4940 / NBRC 14291 / NCTC 11154) (Bacteroides vulgatus).